Consider the following 307-residue polypeptide: Carbamate kinase (307 aa).

This sequence belongs to the carbamate kinase family.

The protein resides in the cytoplasm. The catalysed reaction is hydrogencarbonate + NH4(+) + ATP = carbamoyl phosphate + ADP + H2O + H(+). The protein operates within metabolic intermediate metabolism; carbamoyl phosphate degradation; CO(2) and NH(3) from carbamoyl phosphate: step 1/1. Its function is as follows. Carbamate kinase involved in the arginine deiminase pathway of fermentative arginine utilization. The protein is Carbamate kinase (arcC) of Halobacterium salinarum (strain ATCC 700922 / JCM 11081 / NRC-1) (Halobacterium halobium).